Here is a 46-residue protein sequence, read N- to C-terminus: Denclatoxin-B (46 aa).

3 cysteine pairs are disulfide-bonded: Cys-3–Cys-40, Cys-4–Cys-32, and Cys-16–Cys-26.

Belongs to the plant thionin (TC 1.C.44) family.

Its subcellular location is the secreted. In terms of biological role, thionins are small plant proteins which are toxic to animal cells. They seem to exert their toxic effect at the level of the cell membrane. Their precise function is not known. The polypeptide is Denclatoxin-B (Dendrophthora clavata (Columbian mistletoe)).